Reading from the N-terminus, the 122-residue chain is Putative cryptic phosphonate transport system permease protein PhnE2 (122 aa).

In terms of domain architecture, ABC transmembrane type-1 spans 1 to 114 (MLALFIHTTG…VTVSLLDFLS (114 aa)). Helical transmembrane passes span 3–23 (ALFI…VEAI), 39–59 (LEEI…SYSL), 68–88 (SATV…WEAI), and 93–113 (FQQT…LDFL).

It belongs to the binding-protein-dependent transport system permease family. As to quaternary structure, if the reading frame is restored, the complex is composed of two ATP-binding proteins (PhnC), two transmembrane proteins (PhnE) and a solute-binding protein (PhnD).

Its subcellular location is the cell inner membrane. In terms of biological role, C-terminal fragment of the PhnE protein, part of a phosphonate usage operon that is cryptic in K12 strains. Growth of K12 strains on phosphonate can be observed when it is used as the sole phosphorus source after a 60 hour lag period, suggesting the operon is activated. An intact PhnE in strain B is (AC A0A140NFA3). Part of the binding-protein-dependent transport system for phosphonates; probably responsible for the translocation of the substrate across the membrane. This chain is Putative cryptic phosphonate transport system permease protein PhnE2 (phnE), found in Escherichia coli (strain K12).